The chain runs to 857 residues: ATP-dependent RNA helicase DDX24 (857 aa).

A disordered region spans residues 61-179; it reads NPSRLFSSEE…SPKLPKKSKK (119 aa). Phosphoserine is present on residues S80 and S92. A compositionally biased stretch (basic residues) spans 152–161; sequence PRKKKNKGKK. The residue at position 170 (S170) is a Phosphoserine. Positions 193-221 match the Q motif motif; the sequence is SAWRDLFVPKAVLRALSFLGFSAPTPIQA. Residues 225-528 enclose the Helicase ATP-binding domain; that stretch reads APAIRDKLDI…RILHKKHVKK (304 aa). 238–245 is a binding site for ATP; that stretch reads AETGSGKT. The disordered stretch occupies residues 279-363; it reads RFGATAHLGS…NEDGEEKFDA (85 aa). Phosphoserine occurs at positions 288 and 296. Residues 290-307 are compositionally biased toward basic and acidic residues; the sequence is CKDRTESGVLPEEARIET. The span at 309 to 330 shows a compositional bias: polar residues; sequence AQPSDSGVQATPETSASASAQT. The segment covering 345–363 has biased composition (basic and acidic residues); that stretch reads LEEKPVPKQNEDGEEKFDA. A Glycyl lysine isopeptide (Lys-Gly) (interchain with G-Cter in SUMO2) cross-link involves residue K370. The short motif at 471–474 is the DEAD box element; it reads DEAD. A Helicase C-terminal domain is found at 576-723; the sequence is DLYLYYFLMQ…LFPVQSKYMD (148 aa). K624 participates in a covalent cross-link: Glycyl lysine isopeptide (Lys-Gly) (interchain with G-Cter in SUMO2). Residues 808–857 are disordered; that stretch reads RYPTQSGRPPQPVLASRNIESALSCLSRQKRRRKKPKEPRAPPQPGSSTS. Residues 825–834 are compositionally biased toward polar residues; sequence NIESALSCLS. Basic residues predominate over residues 835-844; it reads RQKRRRKKPK. Residues 848–857 show a composition bias toward pro residues; that stretch reads APPQPGSSTS.

Belongs to the DEAD box helicase family. DDX24/MAK5 subfamily. As to quaternary structure, interacts with FADD. Interacts with RIPK1; this interaction disrupts RLR signaling activation of IFN-dependent transcription factor IRF7. Interacts with NIP7. Interacts with EP300; this interaction prevents TP53 acetylation mediated by EP300. In terms of processing, ubiquitinated by MDM2 without targeting DDX24 for proteasomal degradation. Instead, polyubiquitylated DDX24 promotes interaction with NIP7, a component of pre-rRNP processing complex, and associates with pre-rRNA molecules and pre-ribosomal particles.

It localises to the cytoplasm. The protein localises to the nucleus. The catalysed reaction is ATP + H2O = ADP + phosphate + H(+). In terms of biological role, ATP-dependent RNA helicase that plays a role in various aspects of RNA metabolism including pre-mRNA splicing and is thereby involved in different biological processes such as cell cycle regulation or innate immunity. Plays an inhibitory role in TP53 transcriptional activity and subsequently in TP53 controlled cell growth arrest and senescence by inhibiting its EP300 mediated acetylation. Negatively regulates cytosolic RNA-mediated innate immune signaling at least in part by affecting RIPK1/IRF7 interactions. Alternatively, possesses antiviral activity by recognizing gammaherpesvirus transcripts in the context of lytic reactivation. Plays an essential role in cell cycle regulation in vascular smooth muscle cells by interacting with and regulating FANCA (Fanconi anemia complementation group A) mRNA. The polypeptide is ATP-dependent RNA helicase DDX24 (Ddx24) (Mus musculus (Mouse)).